A 309-amino-acid polypeptide reads, in one-letter code: Aspartate carbamoyltransferase catalytic subunit (309 aa).

Carbamoyl phosphate contacts are provided by R58 and T59. K86 contacts L-aspartate. Carbamoyl phosphate contacts are provided by R108, H136, and Q139. 2 residues coordinate L-aspartate: R170 and R224. Carbamoyl phosphate is bound by residues G266 and P267.

Belongs to the aspartate/ornithine carbamoyltransferase superfamily. ATCase family. As to quaternary structure, heterododecamer (2C3:3R2) of six catalytic PyrB chains organized as two trimers (C3), and six regulatory PyrI chains organized as three dimers (R2).

It catalyses the reaction carbamoyl phosphate + L-aspartate = N-carbamoyl-L-aspartate + phosphate + H(+). It participates in pyrimidine metabolism; UMP biosynthesis via de novo pathway; (S)-dihydroorotate from bicarbonate: step 2/3. Functionally, catalyzes the condensation of carbamoyl phosphate and aspartate to form carbamoyl aspartate and inorganic phosphate, the committed step in the de novo pyrimidine nucleotide biosynthesis pathway. This chain is Aspartate carbamoyltransferase catalytic subunit, found in Campylobacter curvus (strain 525.92).